The following is a 288-amino-acid chain: Intermediate transcription factor 3 small subunit (288 aa).

Belongs to the orthopoxvirus OPG134 family. Heterodimer of a 45 kDa (A23R) and a 32 kDa (A8R) subunit to form the virus intermediate transcription factor (VITF)-3.

In terms of biological role, acts with RNA polymerase to initiate transcription from intermediate gene promoters. This chain is Intermediate transcription factor 3 small subunit (OPG134), found in Homo sapiens (Human).